The primary structure comprises 415 residues: Multidrug resistance protein MdtA (415 aa).

The signal sequence occupies residues 1-21 (MKGSYKSRWVIVIVVVIAAIA). The segment covering 31–47 (DSQSAAPGATKQAQQSP) has biased composition (polar residues). Disordered stretches follow at residues 31-60 (DSQS…GPLA) and 392-415 (EAQS…GARS). Over residues 399 to 415 (SEEKATSREYAKKGARS) the composition is skewed to basic and acidic residues.

The protein belongs to the membrane fusion protein (MFP) (TC 8.A.1) family. Part of a tripartite efflux system composed of MdtA, MdtB and MdtC.

The protein localises to the cell inner membrane. In terms of biological role, the MdtABC tripartite complex confers resistance against novobiocin and deoxycholate. This is Multidrug resistance protein MdtA from Escherichia coli O139:H28 (strain E24377A / ETEC).